Reading from the N-terminus, the 161-residue chain is MDQETVGNVVLLAIVTLISVVQNGFFAHKVEHESRTQNGRSFQRTGTLAFERVYTANQNCVDAYPTFLAVLWSAGLLCSQVPAAFAGLMYLLVRQKYFVGYLGERTQSTPGYIFGKRIILFLFLMSVAGIFNYYLIFFFGSDFENYIKTVTTTISPLLLIP.

The Lumenal portion of the chain corresponds to 1 to 8 (MDQETVGN). A helical membrane pass occupies residues 9 to 30 (VVLLAIVTLISVVQNGFFAHKV). Over 31–52 (EHESRTQNGRSFQRTGTLAFER) the chain is Cytoplasmic. A helical membrane pass occupies residues 53–77 (VYTANQNCVDAYPTFLAVLWSAGLL). Residues 78-80 (CSQ) are Lumenal-facing. A helical transmembrane segment spans residues 81 to 102 (VPAAFAGLMYLLVRQKYFVGYL). The Cytoplasmic portion of the chain corresponds to 103–107 (GERTQ). Residues 108–115 (STPGYIFG) lie within the membrane without spanning it. A helical transmembrane segment spans residues 116-128 (KRIILFLFLMSVA). Topologically, residues 129-161 (GIFNYYLIFFFGSDFENYIKTVTTTISPLLLIP) are lumenal.

It belongs to the MAPEG family. In terms of assembly, homotrimer. Interacts with LTC4S and ALOX5.

The protein resides in the nucleus membrane. It localises to the endoplasmic reticulum membrane. Functionally, required for leukotriene biosynthesis by ALOX5 (5-lipoxygenase). Anchors ALOX5 to the membrane. Binds arachidonic acid, and could play an essential role in the transfer of arachidonic acid to ALOX5. Binds to MK-886, a compound that blocks the biosynthesis of leukotrienes. The polypeptide is Arachidonate 5-lipoxygenase-activating protein (ALOX5AP) (Macaca fascicularis (Crab-eating macaque)).